Here is a 251-residue protein sequence, read N- to C-terminus: MRMLPDFFTGNWDDMFQGLLEAEHPFDFPEPSQAFEEISLHNLFDVELDESEGDPNEEAVDGMFPNWMLSEDHSADSGAASGDSGVGEDLVEVNLDLKCYEEGLPPSGSEADEAEERAEEEETAVSNYVNIAEGASQLVLDCPENPGRGCRACDFHRGSSGNPEAMCALCYMRLTGHCIYSPISDAEGECELGSNEETELPCSLTATAPVRPTPCRVSCRRRPAVDCIEDLLEEDPTDEPLNLSLKRPKSS.

The interaction with RB1 in competition with E2F1 stretch occupies residues 38 to 46 (ISLHNLFDV). The interaction with UBE2I stretch occupies residues 74–136 (SADSGAASGD…NYVNIAEGAS (63 aa)). An LXCXE motif, interaction with host RB1 and TMEM173/STING motif is present at residues 97–101 (LKCYE). Residues 102–122 (EGLPPSGSEADEAEERAEEEE) are disordered. Positions 110 to 122 (EADEAEERAEEEE) are enriched in acidic residues. A zinc finger spans residues 150–170 (CRACDFHRGSSGNPEAMCALC). The short motif at 240-244 (PLNLS) is the PXDLS motif, CTBP-binding element. A Nuclear localization signal motif is present at residues 246–250 (KRPKS).

The protein belongs to the adenoviridae E1A protein family. In terms of assembly, interacts with host UBE2I; this interaction interferes with polySUMOylation. Interacts with host RB1; this interaction induces the aberrant dissociation of RB1-E2F1 complex thereby disrupting the activity of RB1 and activating E2F1-regulated genes. Interacts with host ATF7; the interaction enhances ATF7-mediated viral transactivation activity which requires the zinc binding domains of both proteins. Isoform early E1A 32 kDa protein and isoform early E1A 26 kDa protein interact (via N-terminus) with CUL1 and E3 ubiquitin ligase RBX1; these interactions inhibit RBX1-CUL1-dependent elongation reaction of ubiquitin chains and attenuate ubiquitination of SCF(FBXW7) target proteins. Interacts (via PXLXP motif) with host ZMYND11/BS69 (via MYND-type zinc finger); this interaction inhibits E1A mediated transactivation. Interacts with host EP300; this interaction stimulates the acetylation of RB1 by recruiting EP300 and RB1 into a multimeric-protein complex. Interacts with host CTBP1 and CTBP2; this interaction seems to potentiate viral replication. Interacts with host DCAF7. Interacts with host DYRK1A. Interacts with host KPNA4; this interaction allows E1A import into the host nucleus. Interacts with host EP400; this interaction stabilizes MYC. Interacts with host TBP protein; this interaction probably disrupts the TBP-TATA complex. Interacts (via LXCXE motif) with host TMEM173/STING; this interaction impairs the ability of TMEM173/STING to sense cytosolic DNA and promote the production of type I interferon (IFN-alpha and IFN-beta). Interacts (via C-terminus) with host ZBED1/hDREF (via C-terminus); the interaction is direct.

It localises to the host nucleus. Its function is as follows. Plays a role in viral genome replication by driving entry of quiescent cells into the cell cycle. Stimulation of progression from G1 to S phase allows the virus to efficiently use the cellular DNA replicating machinery to achieve viral genome replication. E1A protein has both transforming and trans-activating activities. Induces the disassembly of the E2F1 transcription factor from RB1 by direct competition for the same binding site on RB1, with subsequent transcriptional activation of E2F1-regulated S-phase genes and of the E2 region of the adenoviral genome. Release of E2F1 leads to the ARF-mediated inhibition of MDM2 and causes TP53/p53 to accumulate because it is not targeted for degradation by MDM2-mediated ubiquitination anymore. This increase in TP53, in turn, would arrest the cell proliferation and direct its death but this effect is counteracted by the viral protein E1B-55K. Inactivation of the ability of RB1 to arrest the cell cycle is critical for cellular transformation, uncontrolled cellular growth and proliferation induced by viral infection. Interaction with RBX1 and CUL1 inhibits ubiquitination of the proteins targeted by SCF(FBXW7) ubiquitin ligase complex, and may be linked to unregulated host cell proliferation. The tumorigenesis-restraining activity of E1A may be related to the disruption of the host CtBP-CtIP complex through the CtBP binding motif. Interaction with host TMEM173/STING impairs the ability of TMEM173/STING to sense cytosolic DNA and promote the production of type I interferon (IFN-alpha and IFN-beta). Promotes the sumoylation of host ZBED1/hDREF with SUMO1. This is Early E1A protein from Human adenovirus F serotype 41 (HAdV-41).